The primary structure comprises 259 residues: Proteasome subunit alpha (259 aa).

A compositionally biased stretch (low complexity) spans 233 to 243; the sequence is PAAPAAASESA. The disordered stretch occupies residues 233–259; the sequence is PAAPAAASESAPEPKPDTETKPADPQD. The span at 244 to 259 shows a compositional bias: basic and acidic residues; sequence PEPKPDTETKPADPQD.

This sequence belongs to the peptidase T1A family. The 20S proteasome core is composed of 14 alpha and 14 beta subunits that assemble into four stacked heptameric rings, resulting in a barrel-shaped structure. The two inner rings, each composed of seven catalytic beta subunits, are sandwiched by two outer rings, each composed of seven alpha subunits. The catalytic chamber with the active sites is on the inside of the barrel. Has a gated structure, the ends of the cylinder being occluded by the N-termini of the alpha-subunits. Is capped by the proteasome-associated ATPase, ARC.

It is found in the cytoplasm. Its pathway is protein degradation; proteasomal Pup-dependent pathway. Its activity is regulated as follows. The formation of the proteasomal ATPase ARC-20S proteasome complex, likely via the docking of the C-termini of ARC into the intersubunit pockets in the alpha-rings, may trigger opening of the gate for substrate entry. Interconversion between the open-gate and close-gate conformations leads to a dynamic regulation of the 20S proteasome proteolysis activity. Its function is as follows. Component of the proteasome core, a large protease complex with broad specificity involved in protein degradation. This Rhodococcus opacus (strain B4) protein is Proteasome subunit alpha.